The primary structure comprises 275 residues: Large ribosomal subunit protein uL2 (275 aa).

The tract at residues glycine 222–lysine 275 is disordered.

This sequence belongs to the universal ribosomal protein uL2 family. In terms of assembly, part of the 50S ribosomal subunit. Forms a bridge to the 30S subunit in the 70S ribosome.

Its function is as follows. One of the primary rRNA binding proteins. Required for association of the 30S and 50S subunits to form the 70S ribosome, for tRNA binding and peptide bond formation. It has been suggested to have peptidyltransferase activity; this is somewhat controversial. Makes several contacts with the 16S rRNA in the 70S ribosome. The sequence is that of Large ribosomal subunit protein uL2 from Desulforamulus reducens (strain ATCC BAA-1160 / DSM 100696 / MI-1) (Desulfotomaculum reducens).